The primary structure comprises 229 residues: Urease accessory protein UreF (229 aa).

This sequence belongs to the UreF family. In terms of assembly, ureD, UreF and UreG form a complex that acts as a GTP-hydrolysis-dependent molecular chaperone, activating the urease apoprotein by helping to assemble the nickel containing metallocenter of UreC. The UreE protein probably delivers the nickel.

The protein resides in the cytoplasm. Its function is as follows. Required for maturation of urease via the functional incorporation of the urease nickel metallocenter. This chain is Urease accessory protein UreF, found in Staphylococcus epidermidis (strain ATCC 12228 / FDA PCI 1200).